The primary structure comprises 215 residues: MRRVLITGFEPFGGERINPSWEVVKQMNDLMMGGVRIVARQLPCAFGEALTALNTAIDDVQPVLVLAIGQAGGRADITIERVAINVDDARIPDNLGNQPVDQPIIQEGPAAYFTRLPIKAMVQGIREAGIPASVSQTAGTYVCNHVMYGLLHRLNQFNNEVKGGFIHIPYLPEQAVDHPGAPSMSAQSVLVALELAISIALQIEHDLHITGGAVH.

Residues glutamate 80, cysteine 143, and histidine 167 contribute to the active site.

The protein belongs to the peptidase C15 family. Homotetramer.

It is found in the cytoplasm. It carries out the reaction Release of an N-terminal pyroglutamyl group from a polypeptide, the second amino acid generally not being Pro.. Functionally, removes 5-oxoproline from various penultimate amino acid residues except L-proline. In Yersinia pestis bv. Antiqua (strain Antiqua), this protein is Pyrrolidone-carboxylate peptidase.